Reading from the N-terminus, the 351-residue chain is DNA polymerase IV (351 aa).

Residues isoleucine 3–glycine 187 enclose the UmuC domain. Residues aspartate 7 and aspartate 105 each contribute to the Mg(2+) site. Glutamate 106 is a catalytic residue.

It belongs to the DNA polymerase type-Y family. It depends on Mg(2+) as a cofactor.

It catalyses the reaction DNA(n) + a 2'-deoxyribonucleoside 5'-triphosphate = DNA(n+1) + diphosphate. In terms of biological role, poorly processive, error-prone DNA polymerase involved in untargeted mutagenesis. Copies undamaged DNA at stalled replication forks, which arise in vivo from mismatched or misaligned primer ends. These misaligned primers can be extended by PolIV. Exhibits no 3'-5' exonuclease (proofreading) activity. May be involved in translesional synthesis. In Sulfurisphaera tokodaii (strain DSM 16993 / JCM 10545 / NBRC 100140 / 7) (Sulfolobus tokodaii), this protein is DNA polymerase IV.